The following is a 557-amino-acid chain: Dihydroxy-acid dehydratase (557 aa).

Residue C47 coordinates [2Fe-2S] cluster. D79 is a Mg(2+) binding site. C120 contacts [2Fe-2S] cluster. Positions 121 and 122 each coordinate Mg(2+). Residue K122 is modified to N6-carboxylysine. C192 serves as a coordination point for [2Fe-2S] cluster. Mg(2+) is bound at residue E444. S470 functions as the Proton acceptor in the catalytic mechanism.

Belongs to the IlvD/Edd family. Homodimer. Requires [2Fe-2S] cluster as cofactor. The cofactor is Mg(2+).

The enzyme catalyses (2R)-2,3-dihydroxy-3-methylbutanoate = 3-methyl-2-oxobutanoate + H2O. It carries out the reaction (2R,3R)-2,3-dihydroxy-3-methylpentanoate = (S)-3-methyl-2-oxopentanoate + H2O. It participates in amino-acid biosynthesis; L-isoleucine biosynthesis; L-isoleucine from 2-oxobutanoate: step 3/4. The protein operates within amino-acid biosynthesis; L-valine biosynthesis; L-valine from pyruvate: step 3/4. Functions in the biosynthesis of branched-chain amino acids. Catalyzes the dehydration of (2R,3R)-2,3-dihydroxy-3-methylpentanoate (2,3-dihydroxy-3-methylvalerate) into 2-oxo-3-methylpentanoate (2-oxo-3-methylvalerate) and of (2R)-2,3-dihydroxy-3-methylbutanoate (2,3-dihydroxyisovalerate) into 2-oxo-3-methylbutanoate (2-oxoisovalerate), the penultimate precursor to L-isoleucine and L-valine, respectively. The polypeptide is Dihydroxy-acid dehydratase (Synechococcus sp. (strain CC9605)).